A 609-amino-acid polypeptide reads, in one-letter code: Meiotically up-regulated gene 28 protein (609 aa).

RRM domains lie at 20–103 (ISIY…YTHI) and 419–499 (CNLF…YAEK).

It is found in the cytoplasm. Functionally, has a role in sporulation. The polypeptide is Meiotically up-regulated gene 28 protein (mug28) (Schizosaccharomyces pombe (strain 972 / ATCC 24843) (Fission yeast)).